Consider the following 360-residue polypeptide: Chorismate synthase (360 aa).

An NADP(+)-binding site is contributed by Arg-46. FMN-binding positions include 122–124 (RAS), Gly-282, 297–301 (KPTPS), and Arg-324.

It belongs to the chorismate synthase family. FMNH2 is required as a cofactor.

It catalyses the reaction 5-O-(1-carboxyvinyl)-3-phosphoshikimate = chorismate + phosphate. The protein operates within metabolic intermediate biosynthesis; chorismate biosynthesis; chorismate from D-erythrose 4-phosphate and phosphoenolpyruvate: step 7/7. In terms of biological role, catalyzes the anti-1,4-elimination of the C-3 phosphate and the C-6 proR hydrogen from 5-enolpyruvylshikimate-3-phosphate (EPSP) to yield chorismate, which is the branch point compound that serves as the starting substrate for the three terminal pathways of aromatic amino acid biosynthesis. This reaction introduces a second double bond into the aromatic ring system. This Archaeoglobus fulgidus (strain ATCC 49558 / DSM 4304 / JCM 9628 / NBRC 100126 / VC-16) protein is Chorismate synthase.